We begin with the raw amino-acid sequence, 473 residues long: Pre-mRNA-splicing factor prp5 (473 aa).

7 WD repeats span residues 161-191, 203-233, 245-275, 287-317, 329-358, 370-399, and 419-449; these read GHLG…KIWD, GHIA…KCWD, GHLS…RVWD, GHKS…RLWD, HHKK…KHWK, GHNA…CFWD, and DSEA…KIYK.

The protein belongs to the WD repeat PRL1/PRL2 family. Belongs to the 40S cdc5-associated complex (or cwf complex), a spliceosome sub-complex reminiscent of a late-stage spliceosome composed of the U2, U5 and U6 snRNAs and at least brr2, cdc5, cwf2/prp3, cwf3/syf1, cwf4/syf3, cwf5/ecm2, spp42/cwf6, cwf7/spf27, cwf8, cwf9, cwf10, cwf11, cwf12, prp45/cwf13, cwf14, cwf15, cwf16, cwf17, cwf18, cwf19, cwf20, cwf21, cwf22, cwf23, cwf24, cwf25, cwf26, cyp7/cwf27, cwf28, cwf29/ist3, lea1, msl1, prp5/cwf1, prp10, prp12/sap130, prp17, prp22, sap61, sap62, sap114, sap145, slu7, smb1, smd1, smd3, smf1, smg1 and syf2.

Its subcellular location is the nucleus. In terms of biological role, required for both cell cycle progression at G2/M and pre-mRNA splicing. Interacts genetically with the PRP4 kinase. This is Pre-mRNA-splicing factor prp5 (prp5) from Schizosaccharomyces pombe (strain 972 / ATCC 24843) (Fission yeast).